A 302-amino-acid polypeptide reads, in one-letter code: Ribosomal RNA small subunit methyltransferase A (302 aa).

Residues Asn-27, Leu-29, Gly-54, Glu-75, Asp-100, and Asn-138 each contribute to the S-adenosyl-L-methionine site.

The protein belongs to the class I-like SAM-binding methyltransferase superfamily. rRNA adenine N(6)-methyltransferase family. RsmA subfamily.

The protein resides in the cytoplasm. It catalyses the reaction adenosine(1518)/adenosine(1519) in 16S rRNA + 4 S-adenosyl-L-methionine = N(6)-dimethyladenosine(1518)/N(6)-dimethyladenosine(1519) in 16S rRNA + 4 S-adenosyl-L-homocysteine + 4 H(+). Functionally, specifically dimethylates two adjacent adenosines (A1518 and A1519) in the loop of a conserved hairpin near the 3'-end of 16S rRNA in the 30S particle. May play a critical role in biogenesis of 30S subunits. The protein is Ribosomal RNA small subunit methyltransferase A of Natranaerobius thermophilus (strain ATCC BAA-1301 / DSM 18059 / JW/NM-WN-LF).